The sequence spans 189 residues: Putative lipoprotein LppK (189 aa).

The first 22 residues, 1 to 22 (MRRNIRVTLGAATIVAALGLSG), serve as a signal peptide directing secretion. The N-palmitoyl cysteine moiety is linked to residue C23. The S-diacylglycerol cysteine moiety is linked to residue C23. 2 disordered regions span residues 26 to 49 (PEFKRSSPPAPSLPPVTSSPLEAA) and 166 to 189 (MGNSPDSTPSATSPAPAPSPTPPG). The span at 169 to 179 (SPDSTPSATSP) shows a compositional bias: low complexity. Residues 180–189 (APAPSPTPPG) are compositionally biased toward pro residues.

The protein belongs to the MTB12 family.

Its subcellular location is the cell membrane. This Mycobacterium tuberculosis (strain CDC 1551 / Oshkosh) protein is Putative lipoprotein LppK (lppK).